The following is a 408-amino-acid chain: Sex comb on midleg-like protein 4 (408 aa).

A phosphoserine mark is found at Ser55 and Ser65. The disordered stretch occupies residues 274–338 (AGGPATTTSG…TRRPSSRNPS (65 aa)). Residues 278–287 (ATTTSGSRTN) show a composition bias toward polar residues. Positions 288–306 (PVPSGGSSSPGLRLPASSP) are enriched in low complexity. The SAM domain occupies 340–406 (WTVEDVVRFV…CYHIDKLKQA (67 aa)).

Belongs to the SCM family.

It is found in the nucleus. Putative Polycomb group (PcG) protein. PcG proteins act by forming multiprotein complexes, which are required to maintain the transcriptionally repressive state of homeotic genes throughout development. The polypeptide is Sex comb on midleg-like protein 4 (Scml4) (Mus musculus (Mouse)).